Here is a 278-residue protein sequence, read N- to C-terminus: Protein D7 (278 aa).

2 consecutive CHHC U11-48K-type zinc fingers follow at residues 6–33 and 40–67; these read LMQC…RENN and LATC…EYRV. The Zn(2+) site is built by C9, H15, H25, C29, C43, H49, H59, and C63. Positions 149–164 are enriched in polar residues; the sequence is QVKQNQPEPEPFTSSE. 2 disordered regions span residues 149 to 230 and 249 to 278; these read QVKQ…PKAN and PGGS…WVRK. Over residues 165–175 the composition is skewed to basic and acidic residues; sequence RNYDPRSKEPP. Positions 188 to 200 are enriched in polar residues; the sequence is ATTNTNPWCRQTG. Residues 214 to 225 are compositionally biased toward basic and acidic residues; the sequence is SSDEGPRNKEFP.

The protein belongs to the UPF0224 (FAM112) family.

It localises to the cytoplasm. Its function is as follows. Involved in oocyte maturation. It is possible that D7 is required at a certain point in the maturation process and that maturation cannot proceed beyond this point unless a threshold amount of D7 protein is provided. The sequence is that of Protein D7 (d7) from Xenopus laevis (African clawed frog).